The chain runs to 808 residues: Phospholipase D alpha 1 (808 aa).

The C2 domain maps to 1 to 125; sequence MAQILLHGTL…LEGEEIDKWV (125 aa). A Ca(2+)-binding site is contributed by Asp-186. Residues 326-364 form the PLD phosphodiesterase 1 domain; it reads TMFTHHQKIVVVDSELPSGESEKRRILSFVGGIDLCDGR. Active-site residues include His-331, Lys-333, and Asp-338. His-331 contributes to the a 1,2-diacyl-sn-glycero-3-phosphate binding site. His-370 and His-404 together coordinate Ca(2+). Positions 520 and 659 each coordinate a 1,2-diacyl-sn-glycero-3-phosphate. A PLD phosphodiesterase 2 domain is found at 654 to 681; it reads FMIYVHSKMMIVDDEYIIVGSANINQRS. Catalysis depends on residues His-659, Lys-661, and Asp-666. Ca(2+) is bound at residue Glu-720.

The protein belongs to the phospholipase D family. C2-PLD subfamily. Requires Ca(2+) as cofactor.

The catalysed reaction is a 1,2-diacyl-sn-glycero-3-phosphocholine + H2O = a 1,2-diacyl-sn-glycero-3-phosphate + choline + H(+). Its function is as follows. Hydrolyzes glycerol-phospholipids at the terminal phosphodiesteric bond. Plays an important role in various cellular processes. This chain is Phospholipase D alpha 1 (PLD1), found in Nicotiana tabacum (Common tobacco).